The chain runs to 62 residues: MAKVCYFTGRKTVSGNNRSHAMNQTKRTVKPNLQKVTILVDGKPKKVWASARALKSGKVERI.

It belongs to the bacterial ribosomal protein bL28 family.

This chain is Large ribosomal subunit protein bL28, found in Streptococcus equi subsp. equi (strain 4047).